Consider the following 461-residue polypeptide: Ribitol-5-phosphate transferase FKTN (461 aa).

Residues 1 to 7 (MSRINKN) lie on the Cytoplasmic side of the membrane. The required and sufficient for interaction with POMGNT1 stretch occupies residues 6–27 (KNVVLALLTLTSSAFLLFQLYY). The chain crosses the membrane as a helical; Signal-anchor for type II membrane protein span at residues 8-28 (VVLALLTLTSSAFLLFQLYYY). At 29–461 (KHYLSTKNGA…SEWDEVIQLY (433 aa)) the chain is on the lumenal side. N-linked (GlcNAc...) asparagine glycosylation is present at Asn92.

This sequence belongs to the LicD transferase family. In terms of assembly, forms a complex composed of FKTN/fukutin, FKRP and RXYLT1/TMEM5. Interacts (via transmembrane domain) with POMGNT1; the interaction is direct and is required for normal POMGNT1 location in Golgi membranes. Expressed in the retina (at protein level). Widely expressed with highest expression in brain, heart, pancreas and skeletal muscle. Expressed at similar levels in control fetal and adult brain. Expressed in migrating neurons, including Cajar-Retzius cells and adult cortical neurons, as well as hippocampal pyramidal cells and cerebellar Purkinje cells. No expression observed in the glia limitans, the subpial astrocytes (which contribute to basement membrane formation) or other glial cells.

The protein localises to the golgi apparatus membrane. Its subcellular location is the cytoplasm. The protein resides in the nucleus. The enzyme catalyses 3-O-[beta-D-GalNAc-(1-&gt;3)-beta-D-GlcNAc-(1-&gt;4)-(O-6-P-alpha-D-Man)]-Thr-[protein] + CDP-L-ribitol = 3-O-[Rib-ol-P-3-beta-D-GalNAc-(1-&gt;3)-beta-D-GlcNAc-(1-&gt;4)-(O-6-P-alpha-D-Man)]-Thr-[protein] + CMP + H(+). It participates in protein modification; protein glycosylation. Catalyzes the transfer of a ribitol-phosphate from CDP-ribitol to the distal N-acetylgalactosamine of the phosphorylated O-mannosyl trisaccharide (N-acetylgalactosamine-beta-3-N-acetylglucosamine-beta-4-(phosphate-6-)mannose), a carbohydrate structure present in alpha-dystroglycan (DAG1). This constitutes the first step in the formation of the ribitol 5-phosphate tandem repeat which links the phosphorylated O-mannosyl trisaccharide to the ligand binding moiety composed of repeats of 3-xylosyl-alpha-1,3-glucuronic acid-beta-1. Required for normal location of POMGNT1 in Golgi membranes, and for normal POMGNT1 activity. May interact with and reinforce a large complex encompassing the outside and inside of muscle membranes. Could be involved in brain development. This is Ribitol-5-phosphate transferase FKTN from Homo sapiens (Human).